We begin with the raw amino-acid sequence, 62 residues long: MYKFEVFKDKAGEFRFRFRASNGEIMFSSEGYKAKASVLNAIESIKKNSPGAETVDQTTATV.

Belongs to the UPF0339 family.

The polypeptide is UPF0339 protein Atu5359 (Agrobacterium fabrum (strain C58 / ATCC 33970) (Agrobacterium tumefaciens (strain C58))).